We begin with the raw amino-acid sequence, 853 residues long: DNA mismatch repair protein MutS (853 aa).

614–621 (GPNMGGKS) contacts ATP.

Belongs to the DNA mismatch repair MutS family.

Functionally, this protein is involved in the repair of mismatches in DNA. It is possible that it carries out the mismatch recognition step. This protein has a weak ATPase activity. The protein is DNA mismatch repair protein MutS of Escherichia coli (strain K12 / MC4100 / BW2952).